Here is a 53-residue protein sequence, read N- to C-terminus: UPF0391 membrane protein msr4317 (53 aa).

2 helical membrane passes run 4 to 24 and 33 to 53; these read WIIILLIVAAAASLLGMPALA and ILIGIVLVIFLLVVLGIFAVT.

It belongs to the UPF0391 family.

The protein resides in the cell membrane. The polypeptide is UPF0391 membrane protein msr4317 (Mesorhizobium japonicum (strain LMG 29417 / CECT 9101 / MAFF 303099) (Mesorhizobium loti (strain MAFF 303099))).